We begin with the raw amino-acid sequence, 88 residues long: uncharacterized protein (88 aa).

This is an uncharacterized protein from Lymantria dispar multicapsid nuclear polyhedrosis virus (LdMNPV).